Reading from the N-terminus, the 152-residue chain is FMN reductase (NADH) RutF (152 aa).

The protein belongs to the non-flavoprotein flavin reductase family. RutF subfamily.

It carries out the reaction FMNH2 + NAD(+) = FMN + NADH + 2 H(+). Functionally, catalyzes the reduction of FMN to FMNH2 which is used to reduce pyrimidine by RutA via the Rut pathway. This is FMN reductase (NADH) RutF from Shigella dysenteriae serotype 1 (strain Sd197).